Reading from the N-terminus, the 2326-residue chain is Nonribosomal peptide synthetase inpB (2326 aa).

In terms of domain architecture, Carrier 1 spans 8–84 (SPSEWLQLEL…SLYSMAQGPA (77 aa)). Ser45 carries the O-(pantetheine 4'-phosphoryl)serine modification. Residues 87 to 121 (ASSSTSDNASDKDSSLDDSETGALTPTTDAGSSLA) form a disordered region. Residues 108 to 121 (GALTPTTDAGSSLA) are compositionally biased toward polar residues. A condensation 1 region spans residues 144 to 568 (QAVVPCSAIQ…LLSPGEVSQL (425 aa)). The adenylation 1 stretch occupies residues 593 to 997 (LQPGAAAVNS…GRRDTQVKIR (405 aa)). In terms of domain architecture, Carrier 2 spans 1145–1221 (EPSTETEFKL…DLARAVESRV (77 aa)). Position 1182 is an O-(pantetheine 4'-phosphoryl)serine (Ser1182). The interval 1226–1247 (DEEDPAPFSVWRESRGSEPSEE) is disordered. Residues 1266–1680 (EDVLPCTALQ…LLSPEDVNQL (415 aa)) are condensation 2. The adenylation 2 stretch occupies residues 1702 to 2097 (EVARSRPGAA…GRIDTQIKIR (396 aa)). The Carrier 3 domain occupies 2216 to 2294 (PPSTEMEKAL…DLAVLLEKRP (79 aa)). The residue at position 2253 (Ser2253) is an O-(pantetheine 4'-phosphoryl)serine.

The protein belongs to the NRP synthetase family.

It participates in secondary metabolite biosynthesis. Nonribosomal peptide synthetase; part of the inp gene cluster that mediates the biosynthesis of fellutamide B, a mycotoxin that acts as a proteasome inhibitor. In the first step of fellutabmide B biosynthesis inpC activates 3-hydroxydodecanoic acid to generate 3-hydroxydodecanoyl-AMP that is then loaded onto the T0 domain of inpB. The 3-hydroxydodecanoyl-S-phosphopantetheinyl-T0 is sequentially extended with L-Asn and L-Gln by the two CAT modules of inpB. The linear lipodipeptide from inpB is then transferred onto inpA for the addition of the third amino acid, L-Leu. Reductive releasing of the lipotripeptide by the TE domain of inpA produces (2S)-fellutamide B. InpF might be involved in the release and transfer of the lipodipeptide from inpB to inpA. The inp cluster-encoded proteasome subunit inpE confers resistance to internally produced fellutamides. The MFS efflux transporter inpD may contribute to fellutamide resistance as well. The chain is Nonribosomal peptide synthetase inpB from Emericella nidulans (strain FGSC A4 / ATCC 38163 / CBS 112.46 / NRRL 194 / M139) (Aspergillus nidulans).